A 325-amino-acid polypeptide reads, in one-letter code: Tetraacyldisaccharide 4'-kinase (325 aa).

55-62 (TAGGNGKT) contacts ATP.

This sequence belongs to the LpxK family.

The catalysed reaction is a lipid A disaccharide + ATP = a lipid IVA + ADP + H(+). It functions in the pathway glycolipid biosynthesis; lipid IV(A) biosynthesis; lipid IV(A) from (3R)-3-hydroxytetradecanoyl-[acyl-carrier-protein] and UDP-N-acetyl-alpha-D-glucosamine: step 6/6. In terms of biological role, transfers the gamma-phosphate of ATP to the 4'-position of a tetraacyldisaccharide 1-phosphate intermediate (termed DS-1-P) to form tetraacyldisaccharide 1,4'-bis-phosphate (lipid IVA). The polypeptide is Tetraacyldisaccharide 4'-kinase (Salmonella paratyphi A (strain ATCC 9150 / SARB42)).